We begin with the raw amino-acid sequence, 553 residues long: Undecaprenyl phosphate-alpha-4-amino-4-deoxy-L-arabinose arabinosyl transferase 2 (553 aa).

12 helical membrane-spanning segments follow: residues 6–26 (ASKI…LFPL), 85–105 (FAVR…IYLL), 115–135 (VAFV…VGTY), 137–157 (VLDP…FWAL), 178–198 (MAFM…MIPV), 208–228 (MLLY…PWVL), 261–281 (FWYY…LLPG), 295–315 (ELFF…IAKG), 317–337 (LPTY…KYGV), 352–372 (GYIN…IQLV), 386–406 (WVLA…CSTL), and 410–430 (HWLW…QAIP).

The protein belongs to the glycosyltransferase 83 family.

It is found in the cell inner membrane. It catalyses the reaction 4-amino-4-deoxy-alpha-L-arabinopyranosyl di-trans,octa-cis-undecaprenyl phosphate + lipid IVA = lipid IIA + di-trans,octa-cis-undecaprenyl phosphate.. It participates in lipopolysaccharide metabolism; 4-amino-4-deoxy-beta-L-arabinose-lipid A biosynthesis. Its function is as follows. Catalyzes the transfer of the L-Ara4N moiety of the glycolipid undecaprenyl phosphate-alpha-L-Ara4N to lipid A. The modified arabinose is attached to lipid A and is required for resistance to polymyxin and cationic antimicrobial peptides. This chain is Undecaprenyl phosphate-alpha-4-amino-4-deoxy-L-arabinose arabinosyl transferase 2, found in Proteus mirabilis (strain HI4320).